A 122-amino-acid polypeptide reads, in one-letter code: Urease subunit beta (122 aa).

The protein belongs to the urease beta subunit family. As to quaternary structure, heterotrimer of UreA (gamma), UreB (beta) and UreC (alpha) subunits. Three heterotrimers associate to form the active enzyme.

It localises to the cytoplasm. The enzyme catalyses urea + 2 H2O + H(+) = hydrogencarbonate + 2 NH4(+). Its pathway is nitrogen metabolism; urea degradation; CO(2) and NH(3) from urea (urease route): step 1/1. This is Urease subunit beta from Flavobacterium johnsoniae (strain ATCC 17061 / DSM 2064 / JCM 8514 / BCRC 14874 / CCUG 350202 / NBRC 14942 / NCIMB 11054 / UW101) (Cytophaga johnsonae).